The following is a 144-amino-acid chain: Snaclec trimecetin subunit beta (144 aa).

The N-terminal stretch at 1–23 is a signal peptide; it reads MGRFIFVSFGLLVVFLSLSGTAA. Cystine bridges form between Cys25–Cys36, Cys53–Cys142, and Cys119–Cys134. Positions 32-143 constitute a C-type lectin domain; the sequence is FRRYCYQVFQ…CSSKRYVVCK (112 aa).

This sequence belongs to the snaclec family. As to quaternary structure, heterodimer of subunits alpha and beta; disulfide-linked. In terms of tissue distribution, expressed by the venom gland.

It is found in the secreted. Snaclec that induces platelet aggregation in either human platelet rich plasma (PRP) or washed platelet suspensions. It causes aggregation in a dose-dependent manner even in the absence of various platelet agonists such as ADP or von Willebrand factor (vWF). Interestingly, it does not induce aggregation in rabbit PRP. A monoclonal antibody against the platelet GPIb receptor blocks the aggregation induced by trimecetin, suggesting that it acts by binding to GPIb (GP1BA/GP1BB). In Protobothrops mucrosquamatus (Taiwan habu), this protein is Snaclec trimecetin subunit beta.